Consider the following 155-residue polypeptide: Nuclear cap-binding protein subunit 2 (155 aa).

MRNA-binding positions include Tyr19, Tyr42, Arg111 to Asp115, Arg122 to Arg126, and Gln132 to Val133. The region spanning Asn39–Gly117 is the RRM domain. Residues Arg122–Pro155 are disordered. Over residues Val133–Pro143 the composition is skewed to basic and acidic residues.

It belongs to the RRM NCBP2 family. Component of the nuclear cap-binding complex (CBC), a heterodimer composed of ncbp1/cbp80 and ncbp2/cbp20 that interacts with m7GpppG-capped RNA.

The protein localises to the nucleus. The protein resides in the cytoplasm. Its function is as follows. Component of the cap-binding complex (CBC), which binds co-transcriptionally to the 5' cap of pre-mRNAs and is involved in various processes such as pre-mRNA splicing, translation regulation, nonsense-mediated mRNA decay, RNA-mediated gene silencing (RNAi) by microRNAs (miRNAs) and mRNA export. The CBC complex is involved in mRNA export from the nucleus, leading to the recruitment of the mRNA export machinery to the 5' end of mRNA and to mRNA export in a 5' to 3' direction through the nuclear pore. The CBC complex is also involved in mediating U snRNA and intronless mRNAs export from the nucleus. The CBC complex is essential for a pioneer round of mRNA translation, before steady state translation when the CBC complex is replaced by cytoplasmic cap-binding protein eIF4E. The pioneer round of mRNA translation mediated by the CBC complex plays a central role in nonsense-mediated mRNA decay (NMD), NMD only taking place in mRNAs bound to the CBC complex, but not on eIF4E-bound mRNAs. The CBC complex enhances NMD in mRNAs containing at least one exon-junction complex (EJC), promoting the interaction between upf1 and upf2. The CBC complex is also involved in 'failsafe' NMD, which is independent of the EJC complex, while it does not participate in Staufen-mediated mRNA decay (SMD). During cell proliferation, the CBC complex is also involved in microRNAs (miRNAs) biogenesis via its interaction with srrt/ars2, thereby being required for miRNA-mediated RNA interference. The CBC complex also acts as a negative regulator of parn, thereby acting as an inhibitor of mRNA deadenylation. In the CBC complex, ncbp2/cbp20 recognizes and binds capped RNAs (m7GpppG-capped RNA) but requires ncbp1/cbp80 to stabilize the movement of its N-terminal loop and lock the CBC into a high affinity cap-binding state with the cap structure. The conventional cap-binding complex with NCBP2 binds both small nuclear RNA (snRNA) and messenger (mRNA) and is involved in their export from the nucleus. This is Nuclear cap-binding protein subunit 2 (ncbp2) from Esox lucius (Northern pike).